The chain runs to 373 residues: Dual-specificity RNA methyltransferase RlmN (373 aa).

The Proton acceptor role is filled by Glu101. The Radical SAM core domain occupies 107–350; that stretch reads ENKRTTLCVS…TIIRKIRGAD (244 aa). Cys114 and Cys355 are disulfide-bonded. [4Fe-4S] cluster-binding residues include Cys121, Cys125, and Cys128. S-adenosyl-L-methionine-binding positions include 179-180, Ser211, 233-235, and Asn312; these read GE and SLH. The active-site S-methylcysteine intermediate is Cys355.

It belongs to the radical SAM superfamily. RlmN family. The cofactor is [4Fe-4S] cluster.

The protein resides in the cytoplasm. The enzyme catalyses adenosine(2503) in 23S rRNA + 2 reduced [2Fe-2S]-[ferredoxin] + 2 S-adenosyl-L-methionine = 2-methyladenosine(2503) in 23S rRNA + 5'-deoxyadenosine + L-methionine + 2 oxidized [2Fe-2S]-[ferredoxin] + S-adenosyl-L-homocysteine. It carries out the reaction adenosine(37) in tRNA + 2 reduced [2Fe-2S]-[ferredoxin] + 2 S-adenosyl-L-methionine = 2-methyladenosine(37) in tRNA + 5'-deoxyadenosine + L-methionine + 2 oxidized [2Fe-2S]-[ferredoxin] + S-adenosyl-L-homocysteine. Its function is as follows. Specifically methylates position 2 of adenine 2503 in 23S rRNA and position 2 of adenine 37 in tRNAs. m2A2503 modification seems to play a crucial role in the proofreading step occurring at the peptidyl transferase center and thus would serve to optimize ribosomal fidelity. The sequence is that of Dual-specificity RNA methyltransferase RlmN from Blochmanniella pennsylvanica (strain BPEN).